The following is a 405-amino-acid chain: Obg-like ATPase homolog (405 aa).

Residues 17-283 enclose the OBG-type G domain; the sequence is PTSGIVGLAN…CKGIASEYFD (267 aa). Residues 26–31 and valine 231 contribute to the ATP site; that span reads NVGKST. The TGS domain occupies 312 to 398; it reads NLISFFTCGP…QDNDIALFKA (87 aa).

It belongs to the TRAFAC class OBG-HflX-like GTPase superfamily. OBG GTPase family.

It localises to the mitochondrion. Its function is as follows. Hydrolyzes ATP, and can also hydrolyze GTP with lower efficiency. Has lower affinity for GTP. This is Obg-like ATPase homolog (YLF2) from Saccharomyces cerevisiae (strain ATCC 204508 / S288c) (Baker's yeast).